Reading from the N-terminus, the 109-residue chain is Large ribosomal subunit protein eL30A (109 aa).

The protein belongs to the eukaryotic ribosomal protein eL30 family. Component of the large ribosomal subunit (LSU). Mature yeast ribosomes consist of a small (40S) and a large (60S) subunit. The 40S small subunit contains 1 molecule of ribosomal RNA (18S rRNA) and at least 33 different proteins. The large 60S subunit contains 3 rRNA molecules (25S, 5.8S and 5S rRNA) and at least 46 different proteins.

It is found in the cytoplasm. Its function is as follows. Component of the ribosome, a large ribonucleoprotein complex responsible for the synthesis of proteins in the cell. The small ribosomal subunit (SSU) binds messenger RNAs (mRNAs) and translates the encoded message by selecting cognate aminoacyl-transfer RNA (tRNA) molecules. The large subunit (LSU) contains the ribosomal catalytic site termed the peptidyl transferase center (PTC), which catalyzes the formation of peptide bonds, thereby polymerizing the amino acids delivered by tRNAs into a polypeptide chain. The nascent polypeptides leave the ribosome through a tunnel in the LSU and interact with protein factors that function in enzymatic processing, targeting, and the membrane insertion of nascent chains at the exit of the ribosomal tunnel. In Schizosaccharomyces pombe (strain 972 / ATCC 24843) (Fission yeast), this protein is Large ribosomal subunit protein eL30A (rpl3001).